We begin with the raw amino-acid sequence, 324 residues long: D-alanine--D-alanine ligase (324 aa).

An ATP-grasp domain is found at 120–322 (NNYLRGFGVE…LKEILTEIIE (203 aa)). An ATP-binding site is contributed by 149–204 (IDKLGLPLIVKPNDGGSSFGVTKVTNITQIQLAIRNAFNEGEGVLIESFIPGTEIT). Mg(2+) contacts are provided by D276, E289, and N291.

The protein belongs to the D-alanine--D-alanine ligase family. It depends on Mg(2+) as a cofactor. Mn(2+) is required as a cofactor.

The protein localises to the cytoplasm. It catalyses the reaction 2 D-alanine + ATP = D-alanyl-D-alanine + ADP + phosphate + H(+). The protein operates within cell wall biogenesis; peptidoglycan biosynthesis. In terms of biological role, cell wall formation. This chain is D-alanine--D-alanine ligase, found in Azobacteroides pseudotrichonymphae genomovar. CFP2.